A 167-amino-acid polypeptide reads, in one-letter code: Golgin subfamily A member 7B (167 aa).

2 S-palmitoyl cysteine lipidation sites follow: C78 and C81. Residues R140–R167 form a disordered region. The segment covering S142–S157 has biased composition (low complexity). Residues S158–R167 show a composition bias toward gly residues.

Belongs to the ERF4 family. Palmitoylated by ZDHHC5. Palmitoylation is required for the maintenance of ZDHHC5 at the plasma membrane.

It is found in the cell membrane. The protein localises to the golgi apparatus membrane. Play a role in cell adhesion by regulating the plasma membrane localization of the palmitoyltransferase ZDHHC5. May be involved in protein transport from Golgi to cell surface. This Mus musculus (Mouse) protein is Golgin subfamily A member 7B (GOLGA7B).